A 134-amino-acid chain; its full sequence is ATP synthase epsilon chain (134 aa).

This sequence belongs to the ATPase epsilon chain family. In terms of assembly, F-type ATPases have 2 components, CF(1) - the catalytic core - and CF(0) - the membrane proton channel. CF(1) has five subunits: alpha(3), beta(3), gamma(1), delta(1), epsilon(1). CF(0) has three main subunits: a, b and c.

It is found in the cell membrane. In terms of biological role, produces ATP from ADP in the presence of a proton gradient across the membrane. The protein is ATP synthase epsilon chain of Anoxybacillus flavithermus (strain DSM 21510 / WK1).